We begin with the raw amino-acid sequence, 208 residues long: N-(5'-phosphoribosyl)anthranilate isomerase (208 aa).

This sequence belongs to the TrpF family.

It carries out the reaction N-(5-phospho-beta-D-ribosyl)anthranilate = 1-(2-carboxyphenylamino)-1-deoxy-D-ribulose 5-phosphate. The protein operates within amino-acid biosynthesis; L-tryptophan biosynthesis; L-tryptophan from chorismate: step 3/5. The sequence is that of N-(5'-phosphoribosyl)anthranilate isomerase from Methanothrix thermoacetophila (strain DSM 6194 / JCM 14653 / NBRC 101360 / PT) (Methanosaeta thermophila).